Consider the following 164-residue polypeptide: Ubiquitin-fold modifier-conjugating enzyme 1 (164 aa).

The active-site Glycyl thioester intermediate is C116.

The protein belongs to the ubiquitin-conjugating enzyme family. UFC1 subfamily.

E2-like enzyme which forms an intermediate with UFM1 via a thioester linkage. The sequence is that of Ubiquitin-fold modifier-conjugating enzyme 1 from Drosophila willistoni (Fruit fly).